Reading from the N-terminus, the 317-residue chain is Transaldolase (317 aa).

The active-site Schiff-base intermediate with substrate is the lysine 125.

It belongs to the transaldolase family. Type 1 subfamily. As to quaternary structure, homodimer.

The protein resides in the cytoplasm. It carries out the reaction D-sedoheptulose 7-phosphate + D-glyceraldehyde 3-phosphate = D-erythrose 4-phosphate + beta-D-fructose 6-phosphate. It functions in the pathway carbohydrate degradation; pentose phosphate pathway; D-glyceraldehyde 3-phosphate and beta-D-fructose 6-phosphate from D-ribose 5-phosphate and D-xylulose 5-phosphate (non-oxidative stage): step 2/3. Transaldolase is important for the balance of metabolites in the pentose-phosphate pathway. The polypeptide is Transaldolase (Delftia acidovorans (strain DSM 14801 / SPH-1)).